Reading from the N-terminus, the 834-residue chain is Protein SEY1 (834 aa).

The disordered stretch occupies residues 1 to 26; sequence MSNVPSPTVTLEGDSPDAAHEAVSSS. At 1-733 the chain is on the cytoplasmic side; sequence MSNVPSPTVT…KRSIMQHVTQ (733 aa). In terms of domain architecture, GB1/RHD3-type G spans 63 to 296; sequence PGDYRIISVF…SESFLFKPNY (234 aa). GTP is bound at residue 73-80; sequence GSQSTGKS. The stretch at 659-688 forms a coiled coil; sequence VRDKKLKRQYETVREEKEAEEEDEDEWDSE. A disordered region spans residues 670–689; it reads TVREEKEAEEEDEDEWDSED. Acidic residues predominate over residues 676–689; the sequence is EAEEEDEDEWDSED. The helical transmembrane segment at 734 to 754 threads the bilayer; that stretch reads IPYYIYIVILVLGWNEFMAIL. At 755–757 the chain is on the lumenal side; the sequence is RNP. The chain crosses the membrane as a helical span at residues 758-778; it reads FFFTLLIMLAGATYVMYSMNL. Residues 779–834 are Cytoplasmic-facing; sequence LGPASIVVQRMANEALGLAKEKLREFVVDDHMQHGHNMKKMTTNDIELDDLSEEST.

It belongs to the TRAFAC class dynamin-like GTPase superfamily. GB1/RHD3 GTPase family. RHD3 subfamily.

It is found in the endoplasmic reticulum membrane. Functionally, cooperates with the reticulon proteins and tubule-shaping DP1 family proteins to generate and maintain the structure of the tubular endoplasmic reticulum network. Has GTPase activity, which is required for its function in ER organization. The sequence is that of Protein SEY1 from Clavispora lusitaniae (strain ATCC 42720) (Yeast).